A 546-amino-acid polypeptide reads, in one-letter code: Zinc metalloproteinase nas-9 (546 aa).

Positions 1–14 (MIFLLFVVFPFVYA) are cleaved as a signal peptide. A propeptide spanning residues 15 to 300 (QLLPELLAGF…GGGGGGRVPR (286 aa)) is cleaved from the precursor. The N-linked (GlcNAc...) asparagine glycan is linked to N248. The 200-residue stretch at 308-507 (SAVQKWDIWK…IRLLKKMYCR (200 aa)) folds into the Peptidase M12A domain. Intrachain disulfides connect C347/C506, C372/C392, C510/C546, C517/C539, and C526/C543. Residue H401 coordinates Zn(2+). The active site involves E402. The Zn(2+) site is built by H405 and H411. In terms of domain architecture, ShKT spans 510 to 546 (CDDQNVHCGTWALHGYCKMKEQMKWMNENCKASCDKC).

Zn(2+) serves as cofactor. As to expression, expressed in hypodermis, uterus and spermatheca.

It is found in the secreted. Functionally, metalloprotease. The sequence is that of Zinc metalloproteinase nas-9 (nas-9) from Caenorhabditis elegans.